Here is a 103-residue protein sequence, read N- to C-terminus: Pyrimidine/purine nucleoside phosphorylase (103 aa).

This sequence belongs to the nucleoside phosphorylase PpnP family.

It carries out the reaction a purine D-ribonucleoside + phosphate = a purine nucleobase + alpha-D-ribose 1-phosphate. It catalyses the reaction adenosine + phosphate = alpha-D-ribose 1-phosphate + adenine. The catalysed reaction is cytidine + phosphate = cytosine + alpha-D-ribose 1-phosphate. The enzyme catalyses guanosine + phosphate = alpha-D-ribose 1-phosphate + guanine. It carries out the reaction inosine + phosphate = alpha-D-ribose 1-phosphate + hypoxanthine. It catalyses the reaction thymidine + phosphate = 2-deoxy-alpha-D-ribose 1-phosphate + thymine. The catalysed reaction is uridine + phosphate = alpha-D-ribose 1-phosphate + uracil. The enzyme catalyses xanthosine + phosphate = alpha-D-ribose 1-phosphate + xanthine. Functionally, catalyzes the phosphorolysis of diverse nucleosides, yielding D-ribose 1-phosphate and the respective free bases. Can use uridine, adenosine, guanosine, cytidine, thymidine, inosine and xanthosine as substrates. Also catalyzes the reverse reactions. The polypeptide is Pyrimidine/purine nucleoside phosphorylase (Sulfurovum sp. (strain NBC37-1)).